A 235-amino-acid polypeptide reads, in one-letter code: Small ribosomal subunit protein eS4 (235 aa).

The S4 RNA-binding domain occupies 38–99; it reads VTLLTIIRDY…GESYRVVYNN (62 aa).

The protein belongs to the eukaryotic ribosomal protein eS4 family.

This chain is Small ribosomal subunit protein eS4 (rps4e), found in Thermoplasma volcanium (strain ATCC 51530 / DSM 4299 / JCM 9571 / NBRC 15438 / GSS1).